The chain runs to 517 residues: Ribose import ATP-binding protein RbsA 1 (517 aa).

ABC transporter domains follow at residues 11–251 and 263–507; these read LEMR…VGRD and YDPG…ALAT. 43–50 lines the ATP pocket; that stretch reads GENGAGKS.

This sequence belongs to the ABC transporter superfamily. Ribose importer (TC 3.A.1.2.1) family. As to quaternary structure, the complex is composed of an ATP-binding protein (RbsA), two transmembrane proteins (RbsC) and a solute-binding protein (RbsB).

Its subcellular location is the cell inner membrane. The enzyme catalyses D-ribose(out) + ATP + H2O = D-ribose(in) + ADP + phosphate + H(+). Part of the ABC transporter complex RbsABC involved in ribose import. Responsible for energy coupling to the transport system. This Burkholderia ambifaria (strain ATCC BAA-244 / DSM 16087 / CCUG 44356 / LMG 19182 / AMMD) (Burkholderia cepacia (strain AMMD)) protein is Ribose import ATP-binding protein RbsA 1.